Consider the following 188-residue polypeptide: Selenoprotein S B (188 aa).

The chain crosses the membrane as a helical span at residues 29 to 49 (EALSNYGWYILLGCIVIYFLI). The span at 116–125 (TWDRMQEGKS) shows a compositional bias: basic and acidic residues. The disordered stretch occupies residues 116–188 (TWDRMQEGKS…RGPSSGGSUG (73 aa)). Over residues 136-147 (ASPRTSTSSSAP) the composition is skewed to low complexity. Position 187 (selenocysteine 187) is a non-standard amino acid, selenocysteine.

It belongs to the selenoprotein S family.

The protein localises to the endoplasmic reticulum membrane. The protein resides in the cytoplasm. Involved in the degradation process of misfolded endoplasmic reticulum (ER) luminal proteins. Participates in the transfer of misfolded proteins from the ER to the cytosol, where they are destroyed by the proteasome in a ubiquitin-dependent manner. This Xenopus laevis (African clawed frog) protein is Selenoprotein S B (vimp-b).